We begin with the raw amino-acid sequence, 139 residues long: uncharacterized protein (139 aa).

This is an uncharacterized protein from Encephalitozoon cuniculi (strain GB-M1) (Microsporidian parasite).